Consider the following 130-residue polypeptide: Small ribosomal subunit protein uS9 (130 aa).

This sequence belongs to the universal ribosomal protein uS9 family.

This chain is Small ribosomal subunit protein uS9, found in Streptococcus equi subsp. zooepidemicus (strain H70).